The sequence spans 281 residues: Sulfur carrier protein FdhD (281 aa).

Cys117 serves as the catalytic Cysteine persulfide intermediate.

Belongs to the FdhD family.

The protein localises to the cytoplasm. Its function is as follows. Required for formate dehydrogenase (FDH) activity. Acts as a sulfur carrier protein that transfers sulfur from IscS to the molybdenum cofactor prior to its insertion into FDH. The polypeptide is Sulfur carrier protein FdhD (Xanthomonas campestris pv. campestris (strain 8004)).